The sequence spans 123 residues: Ribonuclease P protein component (123 aa).

Belongs to the RnpA family. As to quaternary structure, consists of a catalytic RNA component (M1 or rnpB) and a protein subunit.

It carries out the reaction Endonucleolytic cleavage of RNA, removing 5'-extranucleotides from tRNA precursor.. RNaseP catalyzes the removal of the 5'-leader sequence from pre-tRNA to produce the mature 5'-terminus. It can also cleave other RNA substrates such as 4.5S RNA. The protein component plays an auxiliary but essential role in vivo by binding to the 5'-leader sequence and broadening the substrate specificity of the ribozyme. The polypeptide is Ribonuclease P protein component (Streptococcus pneumoniae (strain JJA)).